A 309-amino-acid polypeptide reads, in one-letter code: Ubiquitin-conjugating enzyme E2 32 (309 aa).

The UBC core domain occupies 11–166 (PAVKRILQEV…ERQKIIDEIH (156 aa)). Residue Cys93 is the Glycyl thioester intermediate of the active site. The chain crosses the membrane as a helical span at residues 275-295 (FTWAAVGLTIAIMVLLLKKFI).

The protein belongs to the ubiquitin-conjugating enzyme family.

It is found in the membrane. It catalyses the reaction S-ubiquitinyl-[E1 ubiquitin-activating enzyme]-L-cysteine + [E2 ubiquitin-conjugating enzyme]-L-cysteine = [E1 ubiquitin-activating enzyme]-L-cysteine + S-ubiquitinyl-[E2 ubiquitin-conjugating enzyme]-L-cysteine.. The protein operates within protein modification; protein ubiquitination. Its function is as follows. Accepts the ubiquitin from the E1 complex and catalyzes its covalent attachment to other proteins. This chain is Ubiquitin-conjugating enzyme E2 32 (UBC32), found in Arabidopsis thaliana (Mouse-ear cress).